Reading from the N-terminus, the 438-residue chain is Protein SPMIP7 (438 aa).

Testis-specific.

In terms of biological role, essential for normal spermatogenesis. The protein is Protein SPMIP7 of Homo sapiens (Human).